The sequence spans 386 residues: Queuine tRNA-ribosyltransferase (386 aa).

Asp-99 serves as the catalytic Proton acceptor. Residues 99–103 (DSGGF), Asp-153, Gln-198, and Gly-225 contribute to the substrate site. An RNA binding region spans residues 256 to 262 (GVGKPED). The Nucleophile role is filled by Asp-275. An RNA binding; important for wobble base 34 recognition region spans residues 280–284 (TRNAR). Residues Cys-313, Cys-315, Cys-318, and His-344 each coordinate Zn(2+).

It belongs to the queuine tRNA-ribosyltransferase family. As to quaternary structure, homodimer. Within each dimer, one monomer is responsible for RNA recognition and catalysis, while the other monomer binds to the replacement base PreQ1. Zn(2+) serves as cofactor.

The enzyme catalyses 7-aminomethyl-7-carbaguanine + guanosine(34) in tRNA = 7-aminomethyl-7-carbaguanosine(34) in tRNA + guanine. It functions in the pathway tRNA modification; tRNA-queuosine biosynthesis. Functionally, catalyzes the base-exchange of a guanine (G) residue with the queuine precursor 7-aminomethyl-7-deazaguanine (PreQ1) at position 34 (anticodon wobble position) in tRNAs with GU(N) anticodons (tRNA-Asp, -Asn, -His and -Tyr). Catalysis occurs through a double-displacement mechanism. The nucleophile active site attacks the C1' of nucleotide 34 to detach the guanine base from the RNA, forming a covalent enzyme-RNA intermediate. The proton acceptor active site deprotonates the incoming PreQ1, allowing a nucleophilic attack on the C1' of the ribose to form the product. After dissociation, two additional enzymatic reactions on the tRNA convert PreQ1 to queuine (Q), resulting in the hypermodified nucleoside queuosine (7-(((4,5-cis-dihydroxy-2-cyclopenten-1-yl)amino)methyl)-7-deazaguanosine). The sequence is that of Queuine tRNA-ribosyltransferase from Acinetobacter baylyi (strain ATCC 33305 / BD413 / ADP1).